The primary structure comprises 577 residues: Acyl-coenzyme A synthetase ACSM1, mitochondrial (577 aa).

The transit peptide at 1 to 31 directs the protein to the mitochondrion; sequence MQWLMRFRTLWGIHKSFHNIHPAPSQLRCRS. K85 carries the post-translational modification N6-succinyllysine. An N6-acetyllysine; alternate modification is found at K146. K146 bears the N6-succinyllysine; alternate mark. Position 183 is an N6-succinyllysine (K183). K204 carries the post-translational modification N6-acetyllysine; alternate. Residue K204 is modified to N6-succinyllysine; alternate. Position 214 is an N6-acetyllysine (K214). 226-234 contributes to the ATP binding site; it reads TSGTTGFPK. An N6-succinyllysine modification is found at K237. 2 positions are modified to N6-acetyllysine; alternate: K356 and K391. Residues K356 and K391 each carry the N6-succinyllysine; alternate modification. ATP-binding residues include D452 and R467. Residue K531 is modified to N6-acetyllysine. K538 bears the N6-acetyllysine; alternate mark. N6-succinyllysine; alternate is present on K538. K549 carries the post-translational modification N6-acetyllysine. Residue K563 coordinates ATP.

The protein belongs to the ATP-dependent AMP-binding enzyme family. Monomer. It depends on Mg(2+) as a cofactor. Mn(2+) is required as a cofactor.

It is found in the mitochondrion matrix. The protein localises to the mitochondrion. The enzyme catalyses a medium-chain fatty acid + ATP + CoA = a medium-chain fatty acyl-CoA + AMP + diphosphate. The catalysed reaction is benzoate + ATP + CoA = benzoyl-CoA + AMP + diphosphate. It carries out the reaction (R)-lipoate + GTP + H(+) = (R)-lipoyl-GMP + diphosphate. It catalyses the reaction octanoate + ATP + CoA = octanoyl-CoA + AMP + diphosphate. The enzyme catalyses decanoate + ATP + CoA = decanoyl-CoA + AMP + diphosphate. The catalysed reaction is dodecanoate + ATP + CoA = dodecanoyl-CoA + AMP + diphosphate. It carries out the reaction tetradecanoate + ATP + CoA = tetradecanoyl-CoA + AMP + diphosphate. It catalyses the reaction hexanoate + ATP + CoA = hexanoyl-CoA + AMP + diphosphate. The enzyme catalyses butanoate + ATP + CoA = butanoyl-CoA + AMP + diphosphate. The catalysed reaction is hexadecanoate + ATP + CoA = hexadecanoyl-CoA + AMP + diphosphate. With respect to regulation, activated by monovalent cations, such as potassium, rubidium or ammonium. Its function is as follows. Catalyzes the activation of fatty acids by CoA to produce an acyl-CoA, the first step in fatty acid metabolism. Capable of activating medium-chain fatty acids (e.g. butyric (C4) to decanoic (C10) acids), and certain carboxylate-containing xenobiotics, e.g. benzoate. Also catalyzes the activation of lipoate to lipoyl-nucleoside monophosphate. Activates lipoate with GTP at a 1000-fold higher rate than with ATP and activates both (R)- and (S)-lipoate to the respective lipoyl-GMP, with a preference for (R)-lipoate. The protein is Acyl-coenzyme A synthetase ACSM1, mitochondrial (ACSM1) of Homo sapiens (Human).